The chain runs to 278 residues: MKLCFNEATTLENSNLAKDLEYCEKHGYDYIEIRTMDKLPEYLKDHALSELAEYFQTHHIKPLALNALVFFNNRDEKGHREIIEEFKGMMETCKMLGVKYVVAVPLVTEQKILKEDIKASSVEVLTELSDIAEPYGVKIAVEFVGHPECTVNTFSQAYDIVMTVNRDNVGLVFDSFHFHAMGSSLEDLKKADGKKIFIYHIDDTEDFPIGFLRDEDRVWPGQGAIDLDAHLSTLKDIGFSDVVSVELFRPEYYKLSAEETIRTAKETTVEVVSKYFKI.

Positions 142, 174, 200, and 246 each coordinate a divalent metal cation.

Belongs to the IolI family. It depends on a divalent metal cation as a cofactor.

The catalysed reaction is scyllo-inosose = scyllo-inosine. It functions in the pathway polyol metabolism; myo-inositol degradation into acetyl-CoA. Functionally, involved in the reversible interconverion of 2-keto-myo-inositol (2KMI, inosose or 2,4,6/3,5-pentahydroxycyclohexanone) to 1-keto-D-chiro-inositol (1KDCI or 2,3,5/4,6-pentahydroxycyclohexanone). In Bacillus licheniformis (strain ATCC 14580 / DSM 13 / JCM 2505 / CCUG 7422 / NBRC 12200 / NCIMB 9375 / NCTC 10341 / NRRL NRS-1264 / Gibson 46), this protein is Inosose isomerase (iolI).